A 300-amino-acid chain; its full sequence is Protoheme IX farnesyltransferase (300 aa).

Helical transmembrane passes span 31 to 51 (VMSL…NSLH), 52 to 72 (PFIS…AGAI), 92 to 112 (IVRG…MAFF), 123 to 145 (FLSA…MWLK), 152 to 172 (IVIG…SVSG), 179 to 199 (VILF…LALF), 225 to 245 (ILIY…VGMS), 247 to 267 (IIYL…SISL), and 280 to 300 (FFAY…FCRV).

This sequence belongs to the UbiA prenyltransferase family. Protoheme IX farnesyltransferase subfamily.

It is found in the cell inner membrane. It catalyses the reaction heme b + (2E,6E)-farnesyl diphosphate + H2O = Fe(II)-heme o + diphosphate. It participates in porphyrin-containing compound metabolism; heme O biosynthesis; heme O from protoheme: step 1/1. In terms of biological role, converts heme B (protoheme IX) to heme O by substitution of the vinyl group on carbon 2 of heme B porphyrin ring with a hydroxyethyl farnesyl side group. This chain is Protoheme IX farnesyltransferase, found in Rickettsia bellii (strain OSU 85-389).